Consider the following 77-residue polypeptide: Small ribosomal subunit protein uS17 (77 aa).

This sequence belongs to the universal ribosomal protein uS17 family. In terms of assembly, part of the 30S ribosomal subunit.

Functionally, one of the primary rRNA binding proteins, it binds specifically to the 5'-end of 16S ribosomal RNA. This is Small ribosomal subunit protein uS17 from Rickettsia rickettsii (strain Sheila Smith).